Reading from the N-terminus, the 336-residue chain is Peroxidase 72 (336 aa).

A signal peptide spans 1-23 (MAKSLNILIAALSLIAFSPFCLC). Disulfide bonds link C42/C122, C75/C80, C128/C329, and C207/C239. The active-site Proton acceptor is the H73. Ca(2+)-binding residues include D74, V77, G79, D81, and S83. P170 contacts substrate. N173 is a glycosylation site (N-linked (GlcNAc...) asparagine). H200 contributes to the heme b binding site. Position 201 (T201) interacts with Ca(2+). N-linked (GlcNAc...) asparagine glycosylation is present at N216. D252, T255, and D260 together coordinate Ca(2+).

This sequence belongs to the peroxidase family. Classical plant (class III) peroxidase subfamily. Requires heme b as cofactor. Ca(2+) is required as a cofactor. As to expression, slightly expressed in roots.

It localises to the secreted. The enzyme catalyses 2 a phenolic donor + H2O2 = 2 a phenolic radical donor + 2 H2O. Removal of H(2)O(2), oxidation of toxic reductants, biosynthesis and degradation of lignin, suberization, auxin catabolism, response to environmental stresses such as wounding, pathogen attack and oxidative stress. These functions might be dependent on each isozyme/isoform in each plant tissue. The sequence is that of Peroxidase 72 (PER72) from Arabidopsis thaliana (Mouse-ear cress).